Reading from the N-terminus, the 908-residue chain is Glutamate receptor ionotropic, kainate 2 (908 aa).

The signal sequence occupies residues 1 to 31 (MKIISPVLSNLVFSRSIKVLLCLLWIGYSQG). Topologically, residues 32-561 (TTHVLRFGGI…VFSFLNPLSP (530 aa)) are extracellular. 7 N-linked (GlcNAc...) asparagine glycosylation sites follow: asparagine 67, asparagine 73, asparagine 275, asparagine 378, asparagine 412, asparagine 423, and asparagine 430. Cysteine 96 and cysteine 347 form a disulfide bridge. 3 residues coordinate L-glutamate: proline 516, alanine 518, and arginine 523. Asparagine 546 carries N-linked (GlcNAc...) asparagine glycosylation. A helical membrane pass occupies residues 562 to 582 (DIWMYILLAYLGVSCVLFVIA). Over 583-638 (RFSPYEWYNPHPCNPDSDVVENNFTLLNSFWFGVGALMQQGSELMPKALSTRIVGG) the chain is Cytoplasmic. The helical transmembrane segment at 639-659 (IWWFFTLIIISSYTANLAAFL) threads the bilayer. Topologically, residues 660-819 (TVERMESPID…KEASALGVQN (160 aa)) are extracellular. L-glutamate is bound by residues alanine 689, threonine 690, and glutamate 738. Cysteine 750 and cysteine 804 are joined by a disulfide. A glycan (N-linked (GlcNAc...) asparagine) is linked at asparagine 751. Residues 820-840 (IGGIFIVLAAGLVLSVFVAVG) form a helical membrane-spanning segment. The Cytoplasmic segment spans residues 841–908 (EFLYKSKKNA…RRLPGKETMA (68 aa)). A phosphoserine; by PKC mark is found at serine 846 and serine 868. Lysine 886 is covalently cross-linked (Glycyl lysine isopeptide (Lys-Gly) (interchain with G-Cter in SUMO1)).

This sequence belongs to the glutamate-gated ion channel (TC 1.A.10.1) family. GRIK2 subfamily. As to quaternary structure, homotetramer and heterotetramer with GRIK5. Tetramers may be formed by the dimerization of dimers. Assembles into a kainate-gated homomeric channel that does not bind AMPA. Can form functional heteromeric receptors with GRIK4 and GRIK5. Can form functional heteromeric receptors with GRIK3. Interacts with DLG4. Interacts with NETO2. Interacts (via C-terminus) with KLHL17 (via kelch repeats); the interaction targets GRIK2 for degradation via ubiquitin-proteasome pathway. Post-translationally, sumoylation mediates kainate receptor-mediated endocytosis and regulates synaptic transmission. Sumoylation is enhanced by PIAS3 and desumoylated by SENP1. Ubiquitinated. Ubiquitination regulates the GRIK2 levels at the synapse by leading kainate receptor degradation through proteasome. In terms of processing, phosphorylated by PKC at Ser-868 upon agonist activation, this directly enhance sumoylation. As to expression, highest expression is found in the olfactory lobe, piriform cortex, dentate gyrus, hippocampus, granular cell layer of the cerebellum, and in caudate-putamen.

Its subcellular location is the cell membrane. It localises to the postsynaptic cell membrane. The enzyme catalyses Ca(2+)(in) = Ca(2+)(out). It catalyses the reaction Na(+)(in) = Na(+)(out). Cold receptor activity activated by temperatures between 10-19 degrees Celsius. In terms of biological role, ionotropic glutamate receptor that functions as a cation-permeable ligand-gated ion channel, gated by L-glutamate and the glutamatergic agonist kainic acid. L-glutamate acts as an excitatory neurotransmitter at many synapses in the central nervous system. Binding of the excitatory neurotransmitter L-glutamate induces a conformation change, leading to the opening of the cation channel, and thereby converts the chemical signal to an electrical impulse. The receptor then desensitizes rapidly and enters a transient inactive state, characterized by the presence of bound agonist. Modulates cell surface expression of NETO2. In association with GRIK3, involved in presynaptic facilitation of glutamate release at hippocampal mossy fiber synapses. Independent of its ionotropic glutamate receptor activity, acts as a thermoreceptor conferring sensitivity to cold temperatures. Functions in dorsal root ganglion neurons. The protein is Glutamate receptor ionotropic, kainate 2 (Grik2) of Rattus norvegicus (Rat).